We begin with the raw amino-acid sequence, 585 residues long: Epithelial sodium channel subunit gamma (585 aa).

At 1-55 the chain is on the cytoplasmic side; the sequence is MAPGEKIKAKIKKNLPVTGPQAPTIKELMRWYCLNTNTHGCRRIVVSRGRLRRLL. The helical transmembrane segment at 56–76 threads the bilayer; it reads WIGFTLTAVALILWQCALLVF. Residues 77-477 are Extracellular-facing; sequence SFYTVSVSIK…GGQLGLWMSC (401 aa). 6 disulfides stabilise this stretch: Cys-100-Cys-219, Cys-308-Cys-393, Cys-330-Cys-389, Cys-334-Cys-385, Cys-343-Cys-370, and Cys-345-Cys-359. Asn-207 carries an N-linked (GlcNAc...) asparagine glycan. An N-linked (GlcNAc...) asparagine glycan is attached at Asn-433. Residues 478 to 498 form a helical membrane-spanning segment; that stretch reads SVVCVIEIIEVFFIDFFSIIA. The Cytoplasmic segment spans residues 499-585; the sequence is RRQWQKAKEW…LTDTQMLDEL (87 aa). The tract at residues 513 to 534 is disordered; that stretch reads QAPPCPEAPRSPQGQDNPALDI. The short motif at 559-563 is the PY motif; recruits WW domain-containing proteins and is thereby required for ubiquitination and inhibition of the channel by NEDD4 and NEDD4L element; it reads PPPKY.

This sequence belongs to the amiloride-sensitive sodium channel (TC 1.A.6) family. SCNN1G subfamily. Component of the heterotrimeric epithelial sodium channel (ENaC) composed of an alpha/SCNN1A, a beta/SCNN1B and a gamma/SCNN1G subunit. An additional delta/SCNN1D subunit can replace the alpha/SCNN1A subunit to form an alternative channel with specific properties. Interacts with WWP1 (via WW domains). Interacts with WWP2 (via WW domains); inhibits the channel. Interacts with the full-length immature form of PCSK9 (pro-PCSK9); inhibits ENaC by promoting its proteasomal degradation. Interacts with BPIFA1; the interaction is indirect via SCNN1B and inhibits the proteolytic maturation of SCNN1A and SCNN1G and the activation of ENaC. Phosphorylated on serine and threonine residues. Aldosterone and insulin increase the basal level of phosphorylation. In terms of processing, ubiquitinated. Can be ubiquitinated at multiple sites and undergo monoubiquitination and polyubiquitination. Ubiquitination by NEDD4 or NEDD4L inhibits the ENaC channel through endocytosis, intracellular retention and degradation of its individual subunits. Post-translationally, ENaC is activated through the proteolytic maturation of its subunits. Furin cleaves the SCNN1G subunit first, followed by cleavage by prostasin (PRSS8), which results in a stepwise increase in the open probability of the channel due to the release of an inhibitory tract. BPIFA1, which is recruited by the SCNN1B subunit, prevents the proteolytic activation of ENaC. N-glycosylated. N-linked glycans are processed to complex type during ENaC complex assembly and transport to the plasma membrane.

It localises to the apical cell membrane. The catalysed reaction is Na(+)(in) = Na(+)(out). With respect to regulation, originally identified and characterized by its inhibition by the diuretic drug amiloride. Its function is as follows. This is one of the three pore-forming subunits of the heterotrimeric epithelial sodium channel (ENaC), a critical regulator of sodium balance and fluid homeostasis. ENaC operates in epithelial tissues, where it mediates the electrodiffusion of sodium ions from extracellular fluid through the apical membrane of cells, with water following osmotically. It plays a key role in maintaining sodium homeostasis through electrogenic sodium reabsorption in the kidneys. Additionally, ENaC is essential for airway surface liquid homeostasis, which is crucial for proper mucus clearance. In Pan troglodytes (Chimpanzee), this protein is Epithelial sodium channel subunit gamma.